We begin with the raw amino-acid sequence, 101 residues long: Doublesex- and mab-3-related transcription factor 1 (101 aa).

A DNA-binding region (DM) is located at residues 1-13 (SLIAERQRVMAAQ). Over residues 52–75 (CLLLESSSPTHSTSTVTTVSTSPS) the composition is skewed to low complexity. Residues 52 to 79 (CLLLESSSPTHSTSTVTTVSTSPSEGRM) form a disordered region.

Belongs to the DMRT family.

The protein resides in the nucleus. In terms of biological role, may be required for testis development. The sequence is that of Doublesex- and mab-3-related transcription factor 1 (DMRT1) from Alligator mississippiensis (American alligator).